A 207-amino-acid polypeptide reads, in one-letter code: Oligoribonuclease (207 aa).

Positions 20–183 constitute an Exonuclease domain; the sequence is LVWLDMEMTG…ADIHESIDEL (164 aa). Tyrosine 141 is an active-site residue.

It belongs to the oligoribonuclease family.

Its subcellular location is the cytoplasm. In terms of biological role, 3'-to-5' exoribonuclease specific for small oligoribonucleotides. The chain is Oligoribonuclease from Paraburkholderia xenovorans (strain LB400).